The primary structure comprises 815 residues: Translation initiation factor IF-2 (815 aa).

A compositionally biased stretch (basic and acidic residues) spans 153-176; the sequence is VQEKEAEKKVEKLKTADKPKEGNK. Residues 153 to 219 form a disordered region; the sequence is VQEKEAEKKV…THLSQKIQAE (67 aa). Over residues 191–209 the composition is skewed to basic residues; the sequence is KQLHVARHNPNRRLKKKDR. Residues 315 to 482 enclose the tr-type G domain; that stretch reads ARPPIVTIMG…AISLTAEILE (168 aa). The segment at 324-331 is G1; sequence GHVDHGKT. Position 324 to 331 (324 to 331) interacts with GTP; it reads GHVDHGKT. The interval 349–353 is G2; the sequence is GITQH. The interval 370–373 is G3; sequence DTPG. Residues 370–374 and 424–427 contribute to the GTP site; these read DTPGH and NKID. The segment at 424 to 427 is G4; that stretch reads NKID. The tract at residues 460–462 is G5; the sequence is SAH.

The protein belongs to the TRAFAC class translation factor GTPase superfamily. Classic translation factor GTPase family. IF-2 subfamily.

It is found in the cytoplasm. One of the essential components for the initiation of protein synthesis. Protects formylmethionyl-tRNA from spontaneous hydrolysis and promotes its binding to the 30S ribosomal subunits. Also involved in the hydrolysis of GTP during the formation of the 70S ribosomal complex. The sequence is that of Translation initiation factor IF-2 from Vesicomyosocius okutanii subsp. Calyptogena okutanii (strain HA).